A 329-amino-acid polypeptide reads, in one-letter code: tRNA(Ile)-lysidine synthase, chloroplastic (329 aa).

Serine 32–serine 37 is an ATP binding site.

This sequence belongs to the tRNA(Ile)-lysidine synthase family.

It is found in the plastid. The protein localises to the chloroplast. The catalysed reaction is cytidine(34) in tRNA(Ile2) + L-lysine + ATP = lysidine(34) in tRNA(Ile2) + AMP + diphosphate + H(+). In terms of biological role, ligates lysine onto the cytidine present at position 34 of the AUA codon-specific tRNA(Ile) that contains the anticodon CAU, in an ATP-dependent manner. Cytidine is converted to lysidine, thus changing the amino acid specificity of the tRNA from methionine to isoleucine. The sequence is that of tRNA(Ile)-lysidine synthase, chloroplastic from Pyropia yezoensis (Susabi-nori).